The primary structure comprises 139 residues: D-ribose pyranase (139 aa).

Residue H20 is the Proton donor of the active site. Substrate is bound by residues D28, H106, and Y128–N130.

Belongs to the RbsD / FucU family. RbsD subfamily. As to quaternary structure, homodecamer.

Its subcellular location is the cytoplasm. It catalyses the reaction beta-D-ribopyranose = beta-D-ribofuranose. It functions in the pathway carbohydrate metabolism; D-ribose degradation; D-ribose 5-phosphate from beta-D-ribopyranose: step 1/2. Functionally, catalyzes the interconversion of beta-pyran and beta-furan forms of D-ribose. The polypeptide is D-ribose pyranase (Salmonella typhi).